A 478-amino-acid polypeptide reads, in one-letter code: Nuclear distribution protein PAC1 (478 aa).

The region spanning 9–41 (QAEELHKAMIAYLLSANLPKSAAALREELADSV) is the LisH domain. Residues 60 to 87 (TSVVRLQKKIMDLESRNNALQSELDSAT) are a coiled coil. 8 WD repeats span residues 113-154 (SHRE…RTIK), 156-196 (HTKA…KNIR), 200-247 (GHDH…CVKT), 250-289 (GHVD…TKST), 292-352 (GHEH…IKTL), 354-393 (GHDN…KCVR), 398-439 (AHGH…GASA), and 440-477 (INGV…RVFA).

Belongs to the WD repeat LIS1/nudF family. As to quaternary structure, self-associates. Interacts with NDL1 and dynein.

It localises to the cytoplasm. The protein localises to the cytoskeleton. It is found in the spindle pole. Positively regulates the activity of the minus-end directed microtubule motor protein dynein. May enhance dynein-mediated microtubule sliding by targeting dynein to the microtubule plus end. Required for nuclear migration during vegetative growth as well as development. Required for retrograde early endosome (EE) transport from the hyphal tip. Required for localization of dynein to the mitotic spindle poles. Recruits additional proteins to the dynein complex at SPBs. This is Nuclear distribution protein PAC1 from Paracoccidioides brasiliensis (strain Pb03).